The following is a 96-amino-acid chain: Co-chaperonin GroES (96 aa).

The protein belongs to the GroES chaperonin family. In terms of assembly, heptamer of 7 subunits arranged in a ring. Interacts with the chaperonin GroEL.

Its subcellular location is the cytoplasm. In terms of biological role, together with the chaperonin GroEL, plays an essential role in assisting protein folding. The GroEL-GroES system forms a nano-cage that allows encapsulation of the non-native substrate proteins and provides a physical environment optimized to promote and accelerate protein folding. GroES binds to the apical surface of the GroEL ring, thereby capping the opening of the GroEL channel. The sequence is that of Co-chaperonin GroES from Ralstonia nicotianae (strain ATCC BAA-1114 / GMI1000) (Ralstonia solanacearum).